The sequence spans 455 residues: MSLDIVILAAGQGTRMRSALPKVLHPVAGNSMLGHVIHSARQLQPQGIHVVIGHGAELVRERLAADDLNFVMQNKQLGTGHAVAQALPALTADTVLVLYGDVPLIEVETLQRLLAKANDQQLGLLTVTLDDPTGYGRIVRDEQGRVTAIVEHKDANDAQKAIKEGNTGILALPAARLADWMGRLSNNNAQGEYYLTDVIAMAVADGLVVATEQPHDAMEVQGANDRRQLSELERHYQLREGRRLMAQGVTLRDPARFDVRGEVSVGRDVLIDINVILEGKVVIEDDVQIGPNCVIKNTTLRKGAVVKANSHLEGAVMGEGSDAGPFARLRPGSVLDAKAHVGNFVELKNAHLGEGAKAGHLTYLGDAEIGARTNIGAGTITCNYDGANKFKTVMGEDVFIGSNNSLVAPVEIKAGATTAAGSTITQAVEAGDLAVARARQRNISGWKRPEKIKKS.

The interval 1 to 226 (MSLDIVILAA…AMEVQGANDR (226 aa)) is pyrophosphorylase. UDP-N-acetyl-alpha-D-glucosamine is bound by residues 8–11 (LAAG), lysine 22, glutamine 73, 78–79 (GT), 99–101 (YGD), glycine 136, glutamate 151, asparagine 166, and asparagine 224. Aspartate 101 provides a ligand contact to Mg(2+). Residue asparagine 224 participates in Mg(2+) binding. Positions 227–247 (RQLSELERHYQLREGRRLMAQ) are linker. An N-acetyltransferase region spans residues 248 to 455 (GVTLRDPARF…WKRPEKIKKS (208 aa)). The UDP-N-acetyl-alpha-D-glucosamine site is built by arginine 330 and lysine 348. The active-site Proton acceptor is the histidine 360. Tyrosine 363 and asparagine 374 together coordinate UDP-N-acetyl-alpha-D-glucosamine. Acetyl-CoA contacts are provided by residues alanine 377, 383 to 384 (NY), serine 402, alanine 420, and arginine 437.

The protein in the N-terminal section; belongs to the N-acetylglucosamine-1-phosphate uridyltransferase family. It in the C-terminal section; belongs to the transferase hexapeptide repeat family. As to quaternary structure, homotrimer. Mg(2+) serves as cofactor.

The protein localises to the cytoplasm. It catalyses the reaction alpha-D-glucosamine 1-phosphate + acetyl-CoA = N-acetyl-alpha-D-glucosamine 1-phosphate + CoA + H(+). The catalysed reaction is N-acetyl-alpha-D-glucosamine 1-phosphate + UTP + H(+) = UDP-N-acetyl-alpha-D-glucosamine + diphosphate. Its pathway is nucleotide-sugar biosynthesis; UDP-N-acetyl-alpha-D-glucosamine biosynthesis; N-acetyl-alpha-D-glucosamine 1-phosphate from alpha-D-glucosamine 6-phosphate (route II): step 2/2. It functions in the pathway nucleotide-sugar biosynthesis; UDP-N-acetyl-alpha-D-glucosamine biosynthesis; UDP-N-acetyl-alpha-D-glucosamine from N-acetyl-alpha-D-glucosamine 1-phosphate: step 1/1. The protein operates within bacterial outer membrane biogenesis; LPS lipid A biosynthesis. Functionally, catalyzes the last two sequential reactions in the de novo biosynthetic pathway for UDP-N-acetylglucosamine (UDP-GlcNAc). The C-terminal domain catalyzes the transfer of acetyl group from acetyl coenzyme A to glucosamine-1-phosphate (GlcN-1-P) to produce N-acetylglucosamine-1-phosphate (GlcNAc-1-P), which is converted into UDP-GlcNAc by the transfer of uridine 5-monophosphate (from uridine 5-triphosphate), a reaction catalyzed by the N-terminal domain. This is Bifunctional protein GlmU from Pseudomonas putida (strain ATCC 700007 / DSM 6899 / JCM 31910 / BCRC 17059 / LMG 24140 / F1).